Reading from the N-terminus, the 505-residue chain is Glycerol kinase (505 aa).

Residue T12 participates in ADP binding. T12, T13, and S14 together coordinate ATP. T12 lines the sn-glycerol 3-phosphate pocket. Residue R16 coordinates ADP. Sn-glycerol 3-phosphate-binding residues include R82, E83, Y134, and D249. The glycerol site is built by R82, E83, Y134, D249, and Q250. ADP contacts are provided by T271 and G315. ATP contacts are provided by T271, G315, Q319, and G416. G416 and N420 together coordinate ADP.

This sequence belongs to the FGGY kinase family.

It catalyses the reaction glycerol + ATP = sn-glycerol 3-phosphate + ADP + H(+). The protein operates within polyol metabolism; glycerol degradation via glycerol kinase pathway; sn-glycerol 3-phosphate from glycerol: step 1/1. With respect to regulation, inhibited by fructose 1,6-bisphosphate (FBP). Key enzyme in the regulation of glycerol uptake and metabolism. Catalyzes the phosphorylation of glycerol to yield sn-glycerol 3-phosphate. The sequence is that of Glycerol kinase from Mycolicibacterium vanbaalenii (strain DSM 7251 / JCM 13017 / BCRC 16820 / KCTC 9966 / NRRL B-24157 / PYR-1) (Mycobacterium vanbaalenii).